We begin with the raw amino-acid sequence, 127 residues long: Ycf91-like protein (127 aa).

It belongs to the ycf91 family.

The chain is Ycf91-like protein from Nostoc sp. (strain PCC 7120 / SAG 25.82 / UTEX 2576).